The following is a 120-amino-acid chain: Large ribosomal subunit protein uL18 (120 aa).

This sequence belongs to the universal ribosomal protein uL18 family. Part of the 50S ribosomal subunit; part of the 5S rRNA/L5/L18/L25 subcomplex. Contacts the 5S and 23S rRNAs.

This is one of the proteins that bind and probably mediate the attachment of the 5S RNA into the large ribosomal subunit, where it forms part of the central protuberance. This chain is Large ribosomal subunit protein uL18, found in Methylorubrum populi (strain ATCC BAA-705 / NCIMB 13946 / BJ001) (Methylobacterium populi).